Here is a 488-residue protein sequence, read N- to C-terminus: Ammonium transporter Rh type C-like 2 (488 aa).

At 1–21 the chain is on the cytoplasmic side; the sequence is MGNCFGSRGICDRPKNTNIRL. The helical transmembrane segment at 22–42 threads the bilayer; it reads SLPAVCFVWQVSMIILFGVFV. Residues 43–73 lie on the Extracellular side of the membrane; that stretch reads RYNEEADTNWVYTKKEKNITSDIENDFYFRY. N-linked (GlcNAc...) asparagine glycosylation occurs at asparagine 60. A helical membrane pass occupies residues 74 to 94; sequence PSFQDVHVMIFVGFGFLMTFL. At 95-98 the chain is on the cytoplasmic side; the sequence is KRYS. The chain crosses the membrane as a helical span at residues 99–119; it reads FGAVGFNFLIAAFGLQWALLM. Topologically, residues 120 to 139 are extracellular; sequence QGWFSPLGDDGKIKIGIENL. Residues 140–160 traverse the membrane as a helical segment; it reads INADFCVASCLIAYGAVLGKV. The Cytoplasmic portion of the chain corresponds to 161-162; the sequence is SP. Residues 163–183 traverse the membrane as a helical segment; that stretch reads VQLLVMTLFGITLYAVEEFII. The Extracellular segment spans residues 184–191; it reads LRVLNAKD. A helical membrane pass occupies residues 192–214; that stretch reads AGGSMVIHTFGAYYGLSISRVLY. The Cytoplasmic segment spans residues 215–232; the sequence is RPNLNKSKHMNGSVYHSD. A helical transmembrane segment spans residues 233–253; sequence VFAMIGTLFLWMFWPSFNSAI. The Extracellular segment spans residues 254-264; that stretch reads CNHGDGQHRAA. Residues 265–285 form a helical membrane-spanning segment; it reads INTYLALASTVLTTVAISSMF. At 286-298 the chain is on the cytoplasmic side; sequence EKTGKLDMVHIQN. A helical membrane pass occupies residues 299-319; sequence STLAGGVAVGTAAEFMLMPYG. Serine 320 is a topological domain (extracellular). The helical transmembrane segment at 321 to 341 threads the bilayer; it reads LIVGFFCGIISTLGYIYLTPF. Residues 342 to 356 are Cytoplasmic-facing; the sequence is LEERLKIQDTCGIHN. Residues 357–377 traverse the membrane as a helical segment; that stretch reads LHAMPGVIGGIVGAISAAAAS. Residues 378–409 are Extracellular-facing; sequence KEVYGDLGLKNIFSIEGSNVTRLPTVQGGYQA. The chain crosses the membrane as a helical span at residues 410–430; that stretch reads AALCVALCFGIGGGTFVGLVL. Residues 431–488 are Cytoplasmic-facing; the sequence is KLPIWGDPADEHCFNDEMYWEVPEDEESIIPPVLSYNNHMIPNNKHEEMRETNFAEQS.

It belongs to the ammonium transporter (TC 2.A.49) family. Rh subfamily. As to quaternary structure, homotrimer. In terms of tissue distribution, at larval stages, expressed only in the yolk sac and gill. However, the kidney and the gills are major sites of expression in adults.

Its subcellular location is the apical cell membrane. Functions as an ammonia transporter. May play a role in the elimination of ammonia in the gill. This is Ammonium transporter Rh type C-like 2 (rhcgl2) from Danio rerio (Zebrafish).